A 625-amino-acid chain; its full sequence is UvrABC system protein C (625 aa).

Residues 13 to 92 (DKPGVYIMKD…IKKHRPKFNI (80 aa)) form the GIY-YIG domain. The UVR domain maps to 204–239 (EDIIKKLEKDMKEAADNLEFERAARIRDKINSLKHI).

This sequence belongs to the UvrC family. Interacts with UvrB in an incision complex.

Its subcellular location is the cytoplasm. Functionally, the UvrABC repair system catalyzes the recognition and processing of DNA lesions. UvrC both incises the 5' and 3' sides of the lesion. The N-terminal half is responsible for the 3' incision and the C-terminal half is responsible for the 5' incision. This Acetivibrio thermocellus (strain ATCC 27405 / DSM 1237 / JCM 9322 / NBRC 103400 / NCIMB 10682 / NRRL B-4536 / VPI 7372) (Clostridium thermocellum) protein is UvrABC system protein C.